The primary structure comprises 226 residues: Leucyl/phenylalanyl-tRNA--protein transferase (226 aa).

The protein belongs to the L/F-transferase family.

The protein localises to the cytoplasm. It catalyses the reaction N-terminal L-lysyl-[protein] + L-leucyl-tRNA(Leu) = N-terminal L-leucyl-L-lysyl-[protein] + tRNA(Leu) + H(+). It carries out the reaction N-terminal L-arginyl-[protein] + L-leucyl-tRNA(Leu) = N-terminal L-leucyl-L-arginyl-[protein] + tRNA(Leu) + H(+). The enzyme catalyses L-phenylalanyl-tRNA(Phe) + an N-terminal L-alpha-aminoacyl-[protein] = an N-terminal L-phenylalanyl-L-alpha-aminoacyl-[protein] + tRNA(Phe). In terms of biological role, functions in the N-end rule pathway of protein degradation where it conjugates Leu, Phe and, less efficiently, Met from aminoacyl-tRNAs to the N-termini of proteins containing an N-terminal arginine or lysine. In Pseudomonas fluorescens (strain SBW25), this protein is Leucyl/phenylalanyl-tRNA--protein transferase.